Reading from the N-terminus, the 671-residue chain is Preterminal protein (671 aa).

Positions 380 to 389 (RLPVRRRRRR) match the Nuclear localization signal motif. Residues 386–411 (RRRRVPPPPPPPEEEEGEALMEEEIE) are disordered. Positions 397–411 (PEEEEGEALMEEEIE) are enriched in acidic residues. Serine 580 is modified (O-(5'-phospho-DNA)-serine). The tract at residues 645–671 (GADVPLPPLPAGPEPPLPPGARPRHRF) is disordered. A compositionally biased stretch (pro residues) spans 649 to 665 (PLPPLPAGPEPPLPPGA).

This sequence belongs to the adenoviridae terminal protein family. As to quaternary structure, heterodimer with the polymerase; this heterodimer binds to bp 9 to 18 of the genome. Interacts with host POU2F1; POU2F1 binds to the auxiliary sequences in the inverted terminal repeats and tethers the pTP-POL heterodimer to the origin DNA thereby participating in the assembly of the pre-initiation complex (POL-TP-DBP-NFIA-POU2F1). Post-translationally, preterminal protein is used to replicate viral genome, upon genomic encapsidation it is processed first into iTP and finally into TP by adenovirus protease.

It is found in the host nucleus matrix. In terms of biological role, protein covalently bound to the viral DNA that acts as a primer for viral genomic replication by DNA strand displacement. Assembles on the viral origin of replication in an initiation complex with viral polymerase, DBP, host NFIA and host POU2F1/OCT1. During initiation, the polymerase covalently couples the first dCTP with Ser-580 of pTP. The terminal protein stimulates the template activity over 20 fold compared to protein-free templates. Neo-synthesized viral genomes are linked to two preterminal proteins, one for each 5' end. These new genomes are encapsidated in the nucleus, and during capsid maturation by viral protease, preterminal protein is first cleaved into intermediary (iTP), then into mature TP. May play a role in host nuclear matrix localization of genomic DNA. The chain is Preterminal protein from Human adenovirus C serotype 5 (HAdV-5).